The primary structure comprises 559 residues: Membrane protein insertase YidC (559 aa).

A helical membrane pass occupies residues 6-26 (TVLWMIFSFSLLLLWNNWQIH). The disordered stretch occupies residues 34–80 (GGPSPEQNAPATANNQAATNPASNTPAVPNAPAATSAPSSVPGSTAP). Low complexity predominate over residues 42–80 (APATANNQAATNPASNTPAVPNAPAATSAPSSVPGSTAP). Helical transmembrane passes span 367–387 (LLGNWGWTIVALTVIIKAVFY), 441–461 (LPMVVQIPVFIALYWVLLASV), 480–500 (PYFILPAVMMATMFLQIKLNP), and 510–530 (VMMVMPLVFGGMMFFFPAGLV).

The protein belongs to the OXA1/ALB3/YidC family. Type 1 subfamily. Interacts with the Sec translocase complex via SecD. Specifically interacts with transmembrane segments of nascent integral membrane proteins during membrane integration.

It is found in the cell inner membrane. Functionally, required for the insertion and/or proper folding and/or complex formation of integral membrane proteins into the membrane. Involved in integration of membrane proteins that insert both dependently and independently of the Sec translocase complex, as well as at least some lipoproteins. Aids folding of multispanning membrane proteins. The protein is Membrane protein insertase YidC of Bordetella avium (strain 197N).